We begin with the raw amino-acid sequence, 107 residues long: NADH-quinone oxidoreductase subunit K 2 (107 aa).

3 helical membrane-spanning segments follow: residues Leu-3 to Ala-23, Val-30 to Phe-50, and Ile-67 to Ile-87.

It belongs to the complex I subunit 4L family. NDH-1 is composed of 14 different subunits. Subunits NuoA, H, J, K, L, M, N constitute the membrane sector of the complex.

The protein resides in the cell membrane. It carries out the reaction a quinone + NADH + 5 H(+)(in) = a quinol + NAD(+) + 4 H(+)(out). In terms of biological role, NDH-1 shuttles electrons from NADH, via FMN and iron-sulfur (Fe-S) centers, to quinones in the respiratory chain. The immediate electron acceptor for the enzyme in this species is believed to be a menaquinone. Couples the redox reaction to proton translocation (for every two electrons transferred, four hydrogen ions are translocated across the cytoplasmic membrane), and thus conserves the redox energy in a proton gradient. The polypeptide is NADH-quinone oxidoreductase subunit K 2 (Symbiobacterium thermophilum (strain DSM 24528 / JCM 14929 / IAM 14863 / T)).